A 151-amino-acid chain; its full sequence is Aspartate carbamoyltransferase regulatory chain (151 aa).

Positions 108, 113, 136, and 139 each coordinate Zn(2+).

The protein belongs to the PyrI family. In terms of assembly, contains catalytic and regulatory chains. It depends on Zn(2+) as a cofactor.

Functionally, involved in allosteric regulation of aspartate carbamoyltransferase. In Porphyromonas gingivalis (strain ATCC 33277 / DSM 20709 / CIP 103683 / JCM 12257 / NCTC 11834 / 2561), this protein is Aspartate carbamoyltransferase regulatory chain.